A 105-amino-acid polypeptide reads, in one-letter code: Large ribosomal subunit protein bL21 (105 aa).

The protein belongs to the bacterial ribosomal protein bL21 family. Part of the 50S ribosomal subunit. Contacts protein L20.

This protein binds to 23S rRNA in the presence of protein L20. This chain is Large ribosomal subunit protein bL21, found in Methylobacterium nodulans (strain LMG 21967 / CNCM I-2342 / ORS 2060).